The primary structure comprises 331 residues: Fructose-1,6-bisphosphatase class 1 2 (331 aa).

Positions 80, 98, 100, and 101 each coordinate Mg(2+). Residues 101 to 104 and N189 contribute to the substrate site; that span reads DGSS. E261 contributes to the Mg(2+) binding site.

This sequence belongs to the FBPase class 1 family. In terms of assembly, homotetramer. The cofactor is Mg(2+).

Its subcellular location is the cytoplasm. The catalysed reaction is beta-D-fructose 1,6-bisphosphate + H2O = beta-D-fructose 6-phosphate + phosphate. It participates in carbohydrate biosynthesis; Calvin cycle. The chain is Fructose-1,6-bisphosphatase class 1 2 from Cereibacter sphaeroides (strain ATCC 17023 / DSM 158 / JCM 6121 / CCUG 31486 / LMG 2827 / NBRC 12203 / NCIMB 8253 / ATH 2.4.1.) (Rhodobacter sphaeroides).